A 688-amino-acid polypeptide reads, in one-letter code: Zinc finger and BTB domain-containing protein 48 (688 aa).

In terms of domain architecture, BTB spans 26–89; sequence CDATLDVGGL…FYTGHLALTS (64 aa). Positions 119–140 are disordered; sequence SVGQAAGGQSGLGPPASQNVNS. Lys143 participates in a covalent cross-link: Glycyl lysine isopeptide (Lys-Gly) (interchain with G-Cter in SUMO2). The interval 161–192 is disordered; that stretch reads PRDQEPRGSHSPQRPQLHSPAQSEGPSSLCGK. Residues Ser169, Ser171, and Ser179 each carry the phosphoserine modification. The segment covering 170-186 has biased composition (polar residues); that stretch reads HSPQRPQLHSPAQSEGP. A Glycyl lysine isopeptide (Lys-Gly) (interchain with G-Cter in SUMO2) cross-link involves residue Lys263. The C2H2-type 1 zinc finger occupies 291–313; the sequence is VECPTCHKKFLSKYYLKVHNRKH. Residues Cys293, Cys296, His309, His313, Cys321, Cys324, His337, Cys342, Cys352, Cys355, His368, His372, Cys380, Cys383, His396, and His401 each coordinate Zn(2+). The CCHC-type zinc finger occupies 319–344; that stretch reads FECPKCGKCYFRKENLLEHEARNCMN. 9 C2H2-type zinc fingers span residues 350–372, 378–401, 407–430, 436–459, 465–487, 493–515, 521–544, 550–572, and 578–600; these read FTCSVCQETFRRRMELRVHMVSH, YKCSSCSQQFMQKKDLQSHMIKLH, HACPTCAKCFLSRTELQLHEAFKH, FVCEECGHRASSRNGLQMHIKAKH, HVCEFCSHAFTQKANLNMHLRTH, FQCHLCGKTFRTQASLDKHNRTH, FSCEFCEQRFTEKGPLLRHVASRH, HFCQICGKTFKAVEQLRVHVRRH, and FECTECGYKFTRQAHLRRHMEIH. Zn(2+)-binding residues include Cys552, Cys555, His568, Cys580, Cys583, His596, and His600.

The protein belongs to the krueppel C2H2-type zinc-finger protein family. Interacts with EP300. Detected in adrenal gland and neuroblastoma.

It localises to the nucleus. The protein localises to the chromosome. The protein resides in the telomere. In terms of biological role, plays a critical role in transcriptional regulation and chromatin remodeling. Acts as a regulator of telomere length. Directly binds the telomeric double-stranded 5'-TTAGGG-3' repeat. Preferentially binds to telomeres that have a low concentration of shelterin complex and acts as a regulator of telomere length by initiating telomere trimming, a process that prevents the accumulation of aberrantly long telomeres. Also acts as a transcription regulator that binds to promoter regions. Regulates expression of a small subset of genes, including MTFP1. Acts as a negative regulator of cell proliferation by specifically activating expression of ARF, a tumor suppressor isoform of CDKN2A. Acts as a transcription regulator of CIITA, the major factor regulating MHC class II gene expression. In addition, regulates cellular m6A/m6Am methylation on RNA by facilitating the recruitment of the RNA demethylase, FTO, to target mRNAs. This chain is Zinc finger and BTB domain-containing protein 48, found in Homo sapiens (Human).